The sequence spans 367 residues: MVTQILGAMESQVGGGPAGPALPNGPLLGTNGATDDSKTNLIVNYLPQNMTQDEFKSLFGSIGDIESCKLVRDKITGQSLGYGFVNYSDPNDADKAINTLNGLKLQTKTIKVSYARPSSASIRDANLYVSGLPKTMSQKEMEQLFSQYGRIITSRILVDQVTGVSRGVGFIRFDKRIEAEEAIKGLNGQKPLGAAEPITVKFANNPSQKTGQALLTHLYQSSARRYAGPLHHQTQRFRLDNLLNMAYGVKSPLSLIARFSPIAIDGMSGLAGVGLSGGAAGAGWCIFVYNLSPEADESVLWQLFGPFGAVTNVKVIRDFTTNKCKGFGFVTMTNYDEAAMAIASLNGYRLGERVLQVSFKTSKQHKA.

3 RRM domains span residues 39–117 (TNLI…YARP), 125–205 (ANLY…FANN), and 284–362 (WCIF…FKTS).

This sequence belongs to the RRM elav family. In terms of assembly, interacts with MAP1B light chain LC1. In terms of tissue distribution, brain specific.

In terms of biological role, RNA-binding protein that binds to AU-rich element (ARE) sequences of target mRNAs, including VEGF mRNA. May also bind poly-A tracts via RRM 3. May be involved in neuronal differentiation and maintenance. Plays a role in the stabilization of GAP43 mRNA and in spatial learning. This chain is ELAV-like protein 3 (ELAVL3), found in Homo sapiens (Human).